The following is a 261-amino-acid chain: uncharacterized protein (261 aa).

Residues His7, His9, Glu96, His132, His156, and Asp211 each coordinate a divalent metal cation.

Belongs to the metallo-dependent hydrolases superfamily. TatD-type hydrolase family. A divalent metal cation serves as cofactor.

This is an uncharacterized protein from Mycoplasma pneumoniae (strain ATCC 29342 / M129 / Subtype 1) (Mycoplasmoides pneumoniae).